Reading from the N-terminus, the 244-residue chain is uncharacterized protein (244 aa).

The first 17 residues, 1–17 (MVLHVITALLSIGLCYG), serve as a signal peptide directing secretion.

As to expression, component of the acid-soluble and acid-insoluble organic matrix of prismatic shell layers (at protein level).

It localises to the secreted. This is an uncharacterized protein from Haliotis asinina (Donkey's ear abalone).